The following is a 557-amino-acid chain: Hepatocyte nuclear factor 1-beta (557 aa).

Residues 1-31 (MVSKLTSLQQELLSALLSSGVTKEVLVQALE) are dimerization. Residues 1 to 32 (MVSKLTSLQQELLSALLSSGVTKEVLVQALEE) form the HNF-p1 domain. 4 positions are modified to phosphoserine: serine 49, serine 52, serine 75, and serine 80. A disordered region spans residues 64–85 (TLTNGHAKGRLSGDEGSEDGDD). The region spanning 93–188 (KELQALNTEE…ILRQFNQTVQ (96 aa)) is the POU-specific atypical domain. A DNA-binding region (homeobox; HNF1-type) is located at residues 231–311 (MRRNRFKWGP…NRRKEEAFRQ (81 aa)). A disordered region spans residues 324–370 (HSLNPLLSHGSPHHQPSSSPPNKLSGVRYSQQGNNEVTSSSTISHHG). Positions 328 to 344 (PLLSHGSPHHQPSSSPP) are enriched in low complexity. Over residues 351–370 (RYSQQGNNEVTSSSTISHHG) the composition is skewed to polar residues.

Belongs to the HNF1 homeobox family. As to quaternary structure, binds DNA as a dimer. Can form homodimer or heterodimer with HNF1-alpha. Interacts (via HNF-p1 domain) with PCBD1; the interaction increases its transactivation activity.

The protein resides in the nucleus. Its function is as follows. Transcription factor that binds to the inverted palindrome 5'-GTTAATNATTAAC-3'. Binds to the FPC element in the cAMP regulatory unit of the PLAU gene. Transcriptional activity is increased by coactivator PCBD1. The chain is Hepatocyte nuclear factor 1-beta (HNF1B) from Pongo abelii (Sumatran orangutan).